The sequence spans 364 residues: Spermidine/putrescine import ATP-binding protein PotA (364 aa).

One can recognise an ABC transporter domain in the interval 5–235 (LSFKDVSKGF…PVNRFVADFI (231 aa)). 37–44 (GPSGCGKT) serves as a coordination point for ATP.

The protein belongs to the ABC transporter superfamily. Spermidine/putrescine importer (TC 3.A.1.11.1) family. The complex is composed of two ATP-binding proteins (PotA), two transmembrane proteins (PotB and PotC) and a solute-binding protein (PotD).

The protein resides in the cell membrane. The catalysed reaction is ATP + H2O + polyamine-[polyamine-binding protein]Side 1 = ADP + phosphate + polyamineSide 2 + [polyamine-binding protein]Side 1.. In terms of biological role, part of the ABC transporter complex PotABCD involved in spermidine/putrescine import. Responsible for energy coupling to the transport system. The protein is Spermidine/putrescine import ATP-binding protein PotA of Staphylococcus epidermidis (strain ATCC 35984 / DSM 28319 / BCRC 17069 / CCUG 31568 / BM 3577 / RP62A).